Consider the following 370-residue polypeptide: Peptide chain release factor 2 (370 aa).

At Gln252 the chain carries N5-methylglutamine.

Belongs to the prokaryotic/mitochondrial release factor family. In terms of processing, methylated by PrmC. Methylation increases the termination efficiency of RF2.

Its subcellular location is the cytoplasm. In terms of biological role, peptide chain release factor 2 directs the termination of translation in response to the peptide chain termination codons UGA and UAA. The polypeptide is Peptide chain release factor 2 (Mycobacterium avium (strain 104)).